Consider the following 170-residue polypeptide: Small ribosomal subunit protein uS15 (170 aa).

A compositionally biased stretch (basic residues) spans 1–10 (MARMHSRKKG). The interval 1–20 (MARMHSRKKGSSGSRPPVVD) is disordered.

It belongs to the universal ribosomal protein uS15 family. In terms of assembly, part of the 30S ribosomal subunit.

In Methanothrix thermoacetophila (strain DSM 6194 / JCM 14653 / NBRC 101360 / PT) (Methanosaeta thermophila), this protein is Small ribosomal subunit protein uS15.